A 59-amino-acid chain; its full sequence is MKIKVKLIKGLAGKDQKQKQALRSLGLKKIYEERILEKNPAVLGNLDKVRHLVKVEEVE.

It belongs to the universal ribosomal protein uL30 family. As to quaternary structure, part of the 50S ribosomal subunit.

This is Large ribosomal subunit protein uL30 from Sulfurihydrogenibium sp. (strain YO3AOP1).